The chain runs to 130 residues: Glycine cleavage system H protein (130 aa).

Residues 22–103 form the Lipoyl-binding domain; that stretch reads KAYIGISDCA…PYGSWIAAIE (82 aa). Lys63 carries the N6-lipoyllysine modification.

The protein belongs to the GcvH family. In terms of assembly, the glycine cleavage system is composed of four proteins: P, T, L and H. The cofactor is (R)-lipoate.

Its function is as follows. The glycine cleavage system catalyzes the degradation of glycine. The H protein shuttles the methylamine group of glycine from the P protein to the T protein. The protein is Glycine cleavage system H protein of Clostridium botulinum (strain Okra / Type B1).